A 136-amino-acid chain; its full sequence is Large ribosomal subunit protein uL16 (136 aa).

Belongs to the universal ribosomal protein uL16 family. In terms of assembly, part of the 50S ribosomal subunit.

Its function is as follows. Binds 23S rRNA and is also seen to make contacts with the A and possibly P site tRNAs. In Aliivibrio fischeri (strain ATCC 700601 / ES114) (Vibrio fischeri), this protein is Large ribosomal subunit protein uL16.